Reading from the N-terminus, the 271-residue chain is uncharacterized protein (271 aa).

This is an uncharacterized protein from Acanthamoeba polyphaga mimivirus (APMV).